The sequence spans 153 residues: Large ribosomal subunit protein eL15 (153 aa).

K32 participates in a covalent cross-link: Glycyl lysine isopeptide (Lys-Gly) (interchain with G-Cter in SUMO2). Phosphoserine occurs at positions 46 and 49. The tract at residues 114–135 (TSAGRKSRGLGKGHKFHHTIGG) is disordered. A compositionally biased stretch (basic residues) spans 118–131 (RKSRGLGKGHKFHH).

Belongs to the eukaryotic ribosomal protein eL15 family. Component of the large ribosomal subunit. Interacts with IFIT1 (via TPR repeats 1-4).

It is found in the cytoplasm. Its function is as follows. Component of the large ribosomal subunit. The ribosome is a large ribonucleoprotein complex responsible for the synthesis of proteins in the cell. This Sus scrofa (Pig) protein is Large ribosomal subunit protein eL15 (RPL15).